A 339-amino-acid chain; its full sequence is Protein-arginine kinase (339 aa).

In terms of domain architecture, Phosphagen kinase C-terminal spans 14-242; that stretch reads IVINSNISLS…LNVISEEKKF (229 aa). ATP is bound by residues 17 to 21, 164 to 168, and 195 to 200; these read NSNIS, RASVN, and KGLYEE.

The protein belongs to the ATP:guanido phosphotransferase family.

It carries out the reaction L-arginyl-[protein] + ATP = N(omega)-phospho-L-arginyl-[protein] + ADP + H(+). Functionally, catalyzes the specific phosphorylation of arginine residues in proteins. This is Protein-arginine kinase from Clostridium botulinum (strain Eklund 17B / Type B).